We begin with the raw amino-acid sequence, 527 residues long: Beta-glucosidase 19 (527 aa).

A signal peptide spans 1 to 21 (MKIPLLGLLLLISLVGSPTRA). Residues Gln52 and His155 each contribute to the a beta-D-glucoside site. An N-linked (GlcNAc...) asparagine glycan is attached at Asn183. Residue 200 to 201 (NE) coordinates a beta-D-glucoside. Glu201 acts as the Proton donor in catalysis. A disulfide bond links Cys220 and Cys231. A beta-D-glucoside-binding residues include Tyr345 and Glu418. Glu418 acts as the Nucleophile in catalysis. N-linked (GlcNAc...) asparagine glycosylation occurs at Asn462. Residues Trp469, 476–477 (EW), and Phe485 contribute to the a beta-D-glucoside site. Asn495 carries an N-linked (GlcNAc...) asparagine glycan. The short motif at 524-527 (HEEL) is the Prevents secretion from ER element.

This sequence belongs to the glycosyl hydrolase 1 family.

The protein localises to the endoplasmic reticulum lumen. The catalysed reaction is Hydrolysis of terminal, non-reducing beta-D-glucosyl residues with release of beta-D-glucose.. The polypeptide is Beta-glucosidase 19 (Arabidopsis thaliana (Mouse-ear cress)).